The chain runs to 506 residues: Dipeptide and tripeptide permease A (506 aa).

Topologically, residues 1–36 (MSTANNNSEHPESVSLNAFKQPKAFYLIFSIELWER) are cytoplasmic. Residues 37 to 57 (FGYYGLQGIMAVYLVKMLGLS) traverse the membrane as a helical segment. The Periplasmic segment spans residues 58–61 (EADS). The helical transmembrane segment at 62–82 (ITLFSSFSALVYGFVAIGGWL) threads the bilayer. Residues 83-91 (GDKVLGSKR) lie on the Cytoplasmic side of the membrane. A run of 2 helical transmembrane segments spans residues 92–112 (VIVLGALVLAVGYAMVAYSGH) and 113–133 (EIFWVYLGMATIAVGSGLFKA). At 134–155 (NPSSLLSTCYEKDDPRLDGAFT) the chain is on the cytoplasmic side. Residues 156-176 (MYYMSVNIGSFLSMLATPWLA) form a helical membrane-spanning segment. Residues 177–180 (AKYG) are Periplasmic-facing. A helical transmembrane segment spans residues 181–201 (WSVAFSLSVVGMLITLVNFMV). The Cytoplasmic portion of the chain corresponds to 202–222 (CHKWVKQHGSKPDFKPLQVKK). Residues 223 to 243 (LLMVLVGVVALVALSSWLLHN) form a helical membrane-spanning segment. At 244 to 248 (QIIAR) the chain is on the periplasmic side. The helical transmembrane segment at 249–269 (WALAIVSIGIVIVFAKETFAL) threads the bilayer. Residues 270-276 (HGAARRK) are Cytoplasmic-facing. Residues 277-297 (MIVAFLLMLEAVVFFVLYSQM) traverse the membrane as a helical segment. Residues 298–322 (PTSLNFFAIHNVEHNILGLAFEPEQ) are Periplasmic-facing. A helical transmembrane segment spans residues 323-343 (YQALNPFWIMLASPILAALYN). The Cytoplasmic portion of the chain corresponds to 344 to 354 (KMGDRLPMPHK). The helical transmembrane segment at 355–375 (FAFGMILCSGAFLVLPWGASF) threads the bilayer. Topologically, residues 376-385 (ANEQGIVSVN) are periplasmic. A helical membrane pass occupies residues 386–406 (WLILSYALQSIGELMISGLGL). The Cytoplasmic portion of the chain corresponds to 407-416 (AMVAQLVPQR). The helical transmembrane segment at 417–437 (LMGFIMGSWFLTTAAAALIAG) threads the bilayer. At 438–461 (KVAGLTAVPGDVNDAHASLAIYSH) the chain is on the periplasmic side. The helical transmembrane segment at 462-482 (VFMQIGIATAVIAILMMLTAP) threads the bilayer. The Cytoplasmic portion of the chain corresponds to 483 to 506 (KLHRMTLDTAEDTEKKAQAAAITN).

This sequence belongs to the major facilitator superfamily. Proton-dependent oligopeptide transporter (POT/PTR) (TC 2.A.17) family. DtpA subfamily.

Its subcellular location is the cell inner membrane. In terms of biological role, proton-dependent permease that transports di- and tripeptides. The protein is Dipeptide and tripeptide permease A of Serratia proteamaculans (strain 568).